A 440-amino-acid polypeptide reads, in one-letter code: Chromosome partition protein MukF (440 aa).

A leucine-zipper region spans residues 208–236 (LSETSGTLRELQDTLEAAGDKLQANLLRI).

This sequence belongs to the MukF family. As to quaternary structure, interacts, and probably forms a ternary complex, with MukE and MukB via its C-terminal region. The complex formation is stimulated by calcium or magnesium. It is required for an interaction between MukE and MukB.

It localises to the cytoplasm. The protein resides in the nucleoid. Involved in chromosome condensation, segregation and cell cycle progression. May participate in facilitating chromosome segregation by condensation DNA from both sides of a centrally located replisome during cell division. Not required for mini-F plasmid partitioning. Probably acts via its interaction with MukB and MukE. Overexpression results in anucleate cells. It has a calcium binding activity. This is Chromosome partition protein MukF from Salmonella arizonae (strain ATCC BAA-731 / CDC346-86 / RSK2980).